The chain runs to 124 residues: Small ribosomal subunit protein uS12 (124 aa).

Positions 1–30 are disordered; the sequence is MPTIQQLVRKGRRDKVAKVKTAALKGSPQR. Position 89 is a 3-methylthioaspartic acid (Asp-89). Residues 105–124 are disordered; that stretch reads QGVKNRKQARSRYGAKKEKS. Over residues 108–118 the composition is skewed to basic residues; it reads KNRKQARSRYG.

It belongs to the universal ribosomal protein uS12 family. Part of the 30S ribosomal subunit. Contacts proteins S8 and S17. May interact with IF1 in the 30S initiation complex.

With S4 and S5 plays an important role in translational accuracy. In terms of biological role, interacts with and stabilizes bases of the 16S rRNA that are involved in tRNA selection in the A site and with the mRNA backbone. Located at the interface of the 30S and 50S subunits, it traverses the body of the 30S subunit contacting proteins on the other side and probably holding the rRNA structure together. The combined cluster of proteins S8, S12 and S17 appears to hold together the shoulder and platform of the 30S subunit. This is Small ribosomal subunit protein uS12 from Mycobacterium intracellulare.